Consider the following 129-residue polypeptide: Fluoride-specific ion channel FluC (129 aa).

4 consecutive transmembrane segments (helical) span residues 8-28 (ILLV…VALW), 34-54 (AVFP…IGFI), 70-90 (IFLV…MIEH), and 102-122 (AALY…LGII). G78 and T81 together coordinate Na(+).

The protein belongs to the fluoride channel Fluc/FEX (TC 1.A.43) family.

The protein resides in the cell inner membrane. It carries out the reaction fluoride(in) = fluoride(out). With respect to regulation, na(+) is not transported, but it plays an essential structural role and its presence is essential for fluoride channel function. In terms of biological role, fluoride-specific ion channel. Important for reducing fluoride concentration in the cell, thus reducing its toxicity. The polypeptide is Fluoride-specific ion channel FluC (Chlorobium chlorochromatii (strain CaD3)).